The primary structure comprises 1253 residues: Latent-transforming growth factor beta-binding protein 3 (1253 aa).

The signal sequence occupies residues 1-38 (MPGPRGAAHGLAPAMRQAGALGLLALLLLALLGPGGGA). A glycan (N-linked (GlcNAc...) asparagine) is linked at asparagine 86. Residues 106–138 (RVVVCPLPCMNGGQCSSRNQCLCPPDFTGRFCQ) enclose the EGF-like 1 domain. Intrachain disulfides connect cysteine 110-cysteine 120, cysteine 114-cysteine 126, and cysteine 128-cysteine 137. Residues 244–270 (GPNAEGPASSQHLLPHPKPQHPRPPTQ) are disordered. The 55-residue stretch at 274–328 (GRCFQDTLPKQPCGSNPLPGLTKQEDCCGSIGTAWGQSKCHKCPQLQYTGVQKPG) folds into the TB 1 domain. 3 disulfide bridges follow: cysteine 276–cysteine 300, cysteine 286–cysteine 313, and cysteine 301–cysteine 316. Residue asparagine 346 is glycosylated (N-linked (GlcNAc...) asparagine). An EGF-like 2; calcium-binding domain is found at 352-392 (DINECAMPGMCRHGDCLNNPGSYRCVCPPGHSLGPSRTQCI). Cystine bridges form between cysteine 356–cysteine 367, cysteine 362–cysteine 376, cysteine 378–cysteine 391, cysteine 402–cysteine 425, cysteine 412–cysteine 437, cysteine 426–cysteine 440, and cysteine 427–cysteine 452. In terms of domain architecture, TB 2 spans 400–452 (SLCFRLVSTEHQCQHPLTTRLTRQLCCCSVGKAWGARCQRCPADGTAAFKEIC). The interval 475–555 (FSLFLHPDGP…PTFHRFLPDL (81 aa)) is disordered. The 42-residue stretch at 571-612 (ETDECRLNQNICGHGQCVPGPSDYSCHCNAGYRSHPQHRYCV) folds into the EGF-like 3 domain. 32 disulfide bridges follow: cysteine 575–cysteine 587, cysteine 582–cysteine 596, cysteine 598–cysteine 611, cysteine 617–cysteine 629, cysteine 622–cysteine 638, cysteine 661–cysteine 673, cysteine 667–cysteine 682, cysteine 684–cysteine 698, cysteine 745–cysteine 756, cysteine 751–cysteine 765, cysteine 767–cysteine 780, cysteine 786–cysteine 797, cysteine 792–cysteine 806, cysteine 808–cysteine 821, cysteine 827–cysteine 838, cysteine 833–cysteine 847, cysteine 849–cysteine 861, cysteine 867–cysteine 880, cysteine 874–cysteine 889, cysteine 891–cysteine 904, cysteine 916–cysteine 939, cysteine 926–cysteine 951, cysteine 940–cysteine 956, cysteine 941–cysteine 968, cysteine 994–cysteine 1007, cysteine 1002–cysteine 1016, cysteine 1018–cysteine 1031, cysteine 1037–cysteine 1048, cysteine 1043–cysteine 1057, cysteine 1059–cysteine 1072, cysteine 1113–cysteine 1127, and cysteine 1114–cysteine 1136. In terms of domain architecture, EGF-like 4; calcium-binding spans 613–656 (DVNECEAEPCGPGKGICMNTGGSYNCHCNRGYRLHVGAGGRSCV). The EGF-like 5; calcium-binding domain occupies 657–699 (DLNECTKPHLCGDGGFCINFPGHYKCNCYPGYRLKASRPPICE). An EGF-like 6; calcium-binding domain is found at 741-781 (DVNECSEGTPCSPGWCENLPGSYRCTCAQGYEPAQDGLSCI). In terms of domain architecture, EGF-like 7; calcium-binding spans 782-822 (DVDECEAGKVCQDGICTNTPGSFQCQCLSGYHLSRDRSRCE). Residues 823–861 (DIDECDFPAACIGGDCINTNGSYRCLCPQGHRLVGGRKC) enclose the EGF-like 8; calcium-binding domain. A glycan (N-linked (GlcNAc...) asparagine) is linked at asparagine 842. Positions 863–905 (DIDECSQDPGLCLPHGACENLQGSYVCVCDEGFTLTQDQHGCE) constitute an EGF-like 9; calcium-binding domain. The region spanning 914–968 (KECYLNFDDTVFCDSVLATNVTQQECCCSLGAGWGDHCEIYPCPVYSSAEFHSLC) is the TB 3 domain. Asparagine 933 carries N-linked (GlcNAc...) asparagine glycosylation. An EGF-like 10; calcium-binding domain is found at 990 to 1032 (DIDECILFGAEICKEGKCVNTQPGYECYCKQGFYYDGNLLECV). The 40-residue stretch at 1033-1072 (DVDECLDESNCRNGVCENTRGGYRCACTPPAEYSPAQRQC) folds into the EGF-like 11; calcium-binding domain. One can recognise a TB 4 domain in the interval 1086–1136 (EVCWGQRGEDGMCMGPLAGPALTFDDCCCRQGRGWGTQCRPCPPRGTGSQC). Residues 1138–1148 (TSQSESNSFWD) show a composition bias toward polar residues. The disordered stretch occupies residues 1138–1169 (TSQSESNSFWDTSPLLLGKSPRDEDSSEEDSD). Residues 1204-1231 (DIDECRELNQRGLLCKSERCVNTSGSFR) enclose the EGF-like 12; calcium-binding domain. 2 disulfides stabilise this stretch: cysteine 1208–cysteine 1223 and cysteine 1218–cysteine 1232. A glycan (N-linked (GlcNAc...) asparagine) is linked at asparagine 1225.

This sequence belongs to the LTBP family. Forms part of the large latent transforming growth factor beta (TGFB1) precursor complex; removal is essential for activation of complex. Interacts with EFEMP2. Post-translationally, contains hydroxylated asparagine residues. Two intrachain disulfide bonds from the TB3 domain are rearranged upon TGFB1 binding, and form interchain bonds with TGFB1 propeptide, anchoring it to the extracellular matrix.

The protein resides in the secreted. It localises to the extracellular space. Its subcellular location is the extracellular matrix. Key regulator of transforming growth factor beta (TGFB1, TGFB2 and TGFB3) that controls TGF-beta activation by maintaining it in a latent state during storage in extracellular space. Associates specifically via disulfide bonds with the Latency-associated peptide (LAP), which is the regulatory chain of TGF-beta, and regulates integrin-dependent activation of TGF-beta. The chain is Latent-transforming growth factor beta-binding protein 3 (Ltbp3) from Mus musculus (Mouse).